Reading from the N-terminus, the 426-residue chain is Enolase (426 aa).

Gln163 contributes to the (2R)-2-phosphoglycerate binding site. Catalysis depends on Glu205, which acts as the Proton donor. Mg(2+) contacts are provided by Asp242, Glu283, and Asp310. (2R)-2-phosphoglycerate is bound by residues Lys335, Arg364, Ser365, and Lys386. The active-site Proton acceptor is Lys335.

Belongs to the enolase family. Requires Mg(2+) as cofactor.

The protein resides in the cytoplasm. Its subcellular location is the secreted. The protein localises to the cell surface. It catalyses the reaction (2R)-2-phosphoglycerate = phosphoenolpyruvate + H2O. It functions in the pathway carbohydrate degradation; glycolysis; pyruvate from D-glyceraldehyde 3-phosphate: step 4/5. Its function is as follows. Catalyzes the reversible conversion of 2-phosphoglycerate (2-PG) into phosphoenolpyruvate (PEP). It is essential for the degradation of carbohydrates via glycolysis. This is Enolase from Clavibacter sepedonicus (Clavibacter michiganensis subsp. sepedonicus).